The sequence spans 251 residues: Triosephosphate isomerase (251 aa).

Residue N9–K11 coordinates substrate. H94 acts as the Electrophile in catalysis. E166 serves as the catalytic Proton acceptor. Residues G172, S211, and G232–G233 each bind substrate.

The protein belongs to the triosephosphate isomerase family. Homodimer.

The protein resides in the cytoplasm. It carries out the reaction D-glyceraldehyde 3-phosphate = dihydroxyacetone phosphate. It participates in carbohydrate biosynthesis; gluconeogenesis. Its pathway is carbohydrate degradation; glycolysis; D-glyceraldehyde 3-phosphate from glycerone phosphate: step 1/1. Its function is as follows. Involved in the gluconeogenesis. Catalyzes stereospecifically the conversion of dihydroxyacetone phosphate (DHAP) to D-glyceraldehyde-3-phosphate (G3P). The polypeptide is Triosephosphate isomerase (Stenotrophomonas maltophilia (strain K279a)).